The following is a 127-amino-acid chain: EF-hand calcium-binding domain-containing protein 10 (127 aa).

Residues 63 to 98 (MDNSNIVAMFEMMDSSGRGTISFVQYKEALKTLGLC) enclose the EF-hand domain.

The polypeptide is EF-hand calcium-binding domain-containing protein 10 (EFCAB10) (Homo sapiens (Human)).